Consider the following 134-residue polypeptide: Fatty acid-binding protein, muscle (134 aa).

(9Z)-octadecenoate is bound by residues Arg-109 and 129–131; that span reads RIY.

This sequence belongs to the calycin superfamily. Fatty-acid binding protein (FABP) family. In terms of assembly, monomer. As to expression, adult flight muscle.

The protein resides in the cytoplasm. Binds fatty acids in a 1:1 molar ratio. This Schistocerca gregaria (Desert locust) protein is Fatty acid-binding protein, muscle.